A 169-amino-acid polypeptide reads, in one-letter code: MSHRTSSAFRAERSFRSSSSSSSSSSSSASRALPAQDPPMEKALSMFSDDFGSFMLPHSEPLAFPARPGGQGNIKTLGDAYEFTVDMRDFSPEDIIVTTFNNHIEVRAEKLAADGTVMNTFAHKCQLPEDVDPTSVTSALREDGSLTIRARRHPHTEHVQQTFRTEIKI.

The tract at residues 1 to 37 is disordered; the sequence is MSHRTSSAFRAERSFRSSSSSSSSSSSSASRALPAQD. Residues 1-70 are required for localization to SC35 splicing speckles; that stretch reads MSHRTSSAFR…PLAFPARPGG (70 aa). The segment covering 16–32 has biased composition (low complexity); that stretch reads RSSSSSSSSSSSSASRA. The sHSP domain occupies 61-169; that stretch reads PLAFPARPGG…QQTFRTEIKI (109 aa).

It belongs to the small heat shock protein (HSP20) family. In terms of assembly, interacts with C-terminal domain of actin-binding protein 280. Found in both cardiac and slow skeletal (soleus) muscle.

Its subcellular location is the cytoplasm. The protein resides in the nucleus. It is found in the cajal body. This chain is Heat shock protein beta-7 (Hspb7), found in Mus musculus (Mouse).